The following is a 59-amino-acid chain: Large ribosomal subunit protein bL32 (59 aa).

Positions 1 to 15 (MANPKRKQSKRRSAN) are enriched in basic residues. Residues 1 to 48 (MANPKRKQSKRRSANRRAANAFIAPEFAKDPTDGSAFRPHRVNPKNGM) form a disordered region.

Belongs to the bacterial ribosomal protein bL32 family.

This is Large ribosomal subunit protein bL32 from Opitutus terrae (strain DSM 11246 / JCM 15787 / PB90-1).